A 169-amino-acid polypeptide reads, in one-letter code: Disulfide bond formation protein B 1 (169 aa).

Over 1 to 14 (MSEETIRLGRERRY) the chain is Cytoplasmic. A helical transmembrane segment spans residues 15-31 (LVLLGIICLALIGGALY). Residues 32–49 (MQIVLGEAPCPLCILQRY) are Periplasmic-facing. An intrachain disulfide couples C41 to C44. The chain crosses the membrane as a helical span at residues 50–64 (ALLLIALFAFIGAAM). Over 65 to 71 (RTRRSIT) the chain is Cytoplasmic. Residues 72–89 (VFEVLVVICAIAGAGVAG) form a helical membrane-spanning segment. The Periplasmic portion of the chain corresponds to 90 to 144 (HHVYTQFYPAVSCGIDVLQPIVDDLPLAKIFPLGFQVDGFCSTPYPPILGLSLAQ). C102 and C130 are oxidised to a cystine. The chain crosses the membrane as a helical span at residues 145-163 (WALVAFVLVVILVPLLTSR). Topologically, residues 164 to 169 (NRKALR) are cytoplasmic.

It belongs to the DsbB family.

Its subcellular location is the cell inner membrane. Functionally, required for disulfide bond formation in some periplasmic proteins. Acts by oxidizing the DsbA protein. The chain is Disulfide bond formation protein B 1 from Pseudomonas fluorescens (strain Pf0-1).